We begin with the raw amino-acid sequence, 337 residues long: tRNA N6-adenosine threonylcarbamoyltransferase (337 aa).

Fe cation is bound by residues His-111 and His-115. Substrate-binding positions include 134-138 (LVSGG), Asp-167, Gly-180, and Asn-272. Asp-300 is a Fe cation binding site.

Belongs to the KAE1 / TsaD family. Fe(2+) is required as a cofactor.

It localises to the cytoplasm. The enzyme catalyses L-threonylcarbamoyladenylate + adenosine(37) in tRNA = N(6)-L-threonylcarbamoyladenosine(37) in tRNA + AMP + H(+). Required for the formation of a threonylcarbamoyl group on adenosine at position 37 (t(6)A37) in tRNAs that read codons beginning with adenine. Is involved in the transfer of the threonylcarbamoyl moiety of threonylcarbamoyl-AMP (TC-AMP) to the N6 group of A37, together with TsaE and TsaB. TsaD likely plays a direct catalytic role in this reaction. The chain is tRNA N6-adenosine threonylcarbamoyltransferase from Klebsiella pneumoniae (strain 342).